The following is a 117-amino-acid chain: Immunoglobulin heavy variable 3-48 (117 aa).

Positions 1–19 (MELGLCWVFLVAILEGVQC) are cleaved as a signal peptide. The segment at 20–44 (EVQLVESGGGLVQPGGSLRLSCAAS) is framework-1. The Ig-like domain maps to 20 to 117 (EVQLVESGGG…EDTAVYYCAR (98 aa)). C41 and C115 form a disulfide bridge. A complementarity-determining-1 region spans residues 45-52 (GFTFSSYE). Residues 53-69 (MNWVRQAPGKGLEWVSY) are framework-2. The interval 70–77 (ISSSGSTI) is complementarity-determining-2. Residues 78–115 (YYADSVKGRFTISRDNAKNSLYLQMNSLRAEDTAVYYC) form a framework-3 region. Residues 116-117 (AR) are complementarity-determining-3.

As to quaternary structure, immunoglobulins are composed of two identical heavy chains and two identical light chains; disulfide-linked. In terms of processing, the N-terminus is blocked.

The protein resides in the secreted. The protein localises to the cell membrane. Its function is as follows. V region of the variable domain of immunoglobulin heavy chains that participates in the antigen recognition. Immunoglobulins, also known as antibodies, are membrane-bound or secreted glycoproteins produced by B lymphocytes. In the recognition phase of humoral immunity, the membrane-bound immunoglobulins serve as receptors which, upon binding of a specific antigen, trigger the clonal expansion and differentiation of B lymphocytes into immunoglobulins-secreting plasma cells. Secreted immunoglobulins mediate the effector phase of humoral immunity, which results in the elimination of bound antigens. The antigen binding site is formed by the variable domain of one heavy chain, together with that of its associated light chain. Thus, each immunoglobulin has two antigen binding sites with remarkable affinity for a particular antigen. The variable domains are assembled by a process called V-(D)-J rearrangement and can then be subjected to somatic hypermutations which, after exposure to antigen and selection, allow affinity maturation for a particular antigen. This is Immunoglobulin heavy variable 3-48 from Homo sapiens (Human).